Here is a 511-residue protein sequence, read N- to C-terminus: MKKRALVSVSDKTGVVEFVKGLLEQGIEVISTGGTKKLLEENGLQVIGISEVTGFPEIMDGRVKTLHPNIHGGLLAVRDNETHVAQMNELGMEPIDFVVVNLYPFKETIAKPDVTFADAIENIDIGGPTMIRSAAKNHKFVSVIVDPVDYDIVLAELKENGEVKEETKRKLAAKVFRHTAAYDALISNYLTEQMGEESPETLTVTFEKKQDLRYGENPHQKATFYKAPFAVTSSVAYAEQLHGKELSYNNINDADAALSIVKEFTEPAVVAVKHMNPCGVGVGTDIHEAYTRAYEADPVSIFGGIIAANREIDKATAEKLHEIFLEIIIAPSFSKEALEVLQSKKNLRLLTVNIEKATSASKKLTSVQGGLLVQEEDTLSLDESTISIPTKREPSEQEWKDLKLAWKVVKHVKSNAIVLAKDDMTIGVGAGQMNRVGSAKIAITQAGEKAQGSALASDAFFPMPDTLEEAAKAGITAIIQPGGSIRDEDSIKVADTYGIAMVFTGVRHFKH.

In terms of domain architecture, MGS-like spans 1-145 (MKKRALVSVS…KNHKFVSVIV (145 aa)).

The protein belongs to the PurH family.

The catalysed reaction is (6R)-10-formyltetrahydrofolate + 5-amino-1-(5-phospho-beta-D-ribosyl)imidazole-4-carboxamide = 5-formamido-1-(5-phospho-D-ribosyl)imidazole-4-carboxamide + (6S)-5,6,7,8-tetrahydrofolate. The enzyme catalyses IMP + H2O = 5-formamido-1-(5-phospho-D-ribosyl)imidazole-4-carboxamide. It participates in purine metabolism; IMP biosynthesis via de novo pathway; 5-formamido-1-(5-phospho-D-ribosyl)imidazole-4-carboxamide from 5-amino-1-(5-phospho-D-ribosyl)imidazole-4-carboxamide (10-formyl THF route): step 1/1. It functions in the pathway purine metabolism; IMP biosynthesis via de novo pathway; IMP from 5-formamido-1-(5-phospho-D-ribosyl)imidazole-4-carboxamide: step 1/1. The polypeptide is Bifunctional purine biosynthesis protein PurH (Bacillus cereus (strain Q1)).